A 123-amino-acid polypeptide reads, in one-letter code: Small ribosomal subunit protein uS12 (123 aa).

At D89 the chain carries 3-methylthioaspartic acid.

It belongs to the universal ribosomal protein uS12 family. As to quaternary structure, part of the 30S ribosomal subunit. Contacts proteins S8 and S17. May interact with IF1 in the 30S initiation complex.

Functionally, with S4 and S5 plays an important role in translational accuracy. In terms of biological role, interacts with and stabilizes bases of the 16S rRNA that are involved in tRNA selection in the A site and with the mRNA backbone. Located at the interface of the 30S and 50S subunits, it traverses the body of the 30S subunit contacting proteins on the other side and probably holding the rRNA structure together. The combined cluster of proteins S8, S12 and S17 appears to hold together the shoulder and platform of the 30S subunit. This is Small ribosomal subunit protein uS12 from Geotalea uraniireducens (strain Rf4) (Geobacter uraniireducens).